Reading from the N-terminus, the 358-residue chain is 3-dehydroquinate synthase (358 aa).

NAD(+) contacts are provided by residues 70 to 75 (DGEQFK), 104 to 108 (GVIGD), 128 to 129 (TT), Lys141, Lys150, and 168 to 171 (CLHT). Residues Glu183, His246, and His263 each coordinate Zn(2+).

It belongs to the sugar phosphate cyclases superfamily. Dehydroquinate synthase family. The cofactor is Co(2+). Zn(2+) serves as cofactor. Requires NAD(+) as cofactor.

It is found in the cytoplasm. The enzyme catalyses 7-phospho-2-dehydro-3-deoxy-D-arabino-heptonate = 3-dehydroquinate + phosphate. The protein operates within metabolic intermediate biosynthesis; chorismate biosynthesis; chorismate from D-erythrose 4-phosphate and phosphoenolpyruvate: step 2/7. Its function is as follows. Catalyzes the conversion of 3-deoxy-D-arabino-heptulosonate 7-phosphate (DAHP) to dehydroquinate (DHQ). In Shewanella baltica (strain OS185), this protein is 3-dehydroquinate synthase.